The chain runs to 413 residues: Snake venom metalloproteinase AaPA (413 aa).

A signal peptide spans 1 to 20 (MIQVLLVTICLAAFPYQGSS). Positions 21-189 (IILESGKVND…KKASQLIVST (169 aa)) are excised as a propeptide. One can recognise a Peptidase M12B domain in the interval 193-390 (RYMEIVIVVD…ENPPCILNKP (198 aa)). 2 residues coordinate Ca(2+): Glu-196 and Asp-280. Intrachain disulfides connect Cys-304–Cys-385, Cys-344–Cys-369, and Cys-346–Cys-352. His-329 contacts Zn(2+). Glu-330 is an active-site residue. The Zn(2+) site is built by His-333 and His-339. Cys-385, Asn-388, Val-400, Asn-403, Leu-405, Glu-407, and Asp-413 together coordinate Ca(2+). Positions 391-413 (LRTDTVSTPVSGNELLEAEKDYD) are excised as a propeptide.

This sequence belongs to the venom metalloproteinase (M12B) family. P-I subfamily. Monomer. Zn(2+) serves as cofactor. Expressed by the venom gland.

The protein localises to the secreted. In terms of biological role, snake venom zinc metalloprotease that may activate prothrombin. The polypeptide is Snake venom metalloproteinase AaPA (Deinagkistrodon acutus (Hundred-pace snake)).